Reading from the N-terminus, the 526-residue chain is Triacylglycerol lipase OBL1 (526 aa).

Residues 79-99 form a helical membrane-spanning segment; sequence GHLTDFLLNFYYQNHGFLGIL. The GXSXG signature appears at 338–342; the sequence is GHSLG. The active-site Nucleophile is the Ser-340. Catalysis depends on charge relay system residues Asp-404 and His-497.

This sequence belongs to the AB hydrolase superfamily. Lipase family.

The protein localises to the membrane. The enzyme catalyses a triacylglycerol + H2O = a diacylglycerol + a fatty acid + H(+). Functionally, acid lipase that can hydrolyze a range of triacylglycerols but is not active on phospholipids. In vitro, hydrolyzes triolein, trilinolein, triricinolein, tripalmitin, trilaurin and tricaprin. May play a role in the regulation of lipolysis in germinating seeds. The protein is Triacylglycerol lipase OBL1 of Ricinus communis (Castor bean).